The sequence spans 556 residues: Glutamine--tRNA ligase (556 aa).

A 'HIGH' region motif is present at residues 34–44 (PEPNGFLHIGH). ATP-binding positions include 35–37 (EPN) and 41–47 (HIGHAKA). Residues D67 and Y212 each coordinate L-glutamine. Residues T231, 261–262 (RL), and 269–271 (MSK) each bind ATP. Residues 268–272 (LMSKR) carry the 'KMSKS' region motif.

The protein belongs to the class-I aminoacyl-tRNA synthetase family. As to quaternary structure, monomer.

The protein localises to the cytoplasm. It catalyses the reaction tRNA(Gln) + L-glutamine + ATP = L-glutaminyl-tRNA(Gln) + AMP + diphosphate. The chain is Glutamine--tRNA ligase from Colwellia psychrerythraea (strain 34H / ATCC BAA-681) (Vibrio psychroerythus).